We begin with the raw amino-acid sequence, 220 residues long: Small ribosomal subunit protein uS3c (220 aa).

In terms of domain architecture, KH type-2 spans 48–119; that stretch reads VQKHTNNPFH…KLCLILIKID (72 aa).

The protein belongs to the universal ribosomal protein uS3 family. As to quaternary structure, part of the 30S ribosomal subunit.

The protein resides in the plastid. It localises to the chloroplast. The protein is Small ribosomal subunit protein uS3c (rps3) of Psilotum nudum (Whisk fern).